The primary structure comprises 590 residues: Laccase-19 (590 aa).

Residues 1 to 28 (MEKLSMVTSLLCAITVAVLAVAVVSGEA) form the signal peptide. 2 Plastocyanin-like domains span residues 36–152 (VVHE…PRDG) and 161–315 (KDVP…YAGT). N41 and N47 each carry an N-linked (GlcNAc...) asparagine glycan. H86 and H88 together coordinate Cu cation. N-linked (GlcNAc...) asparagine glycosylation occurs at N120. H131 and H133 together coordinate Cu cation. N205, N344, N378, N397, N434, and N465 each carry an N-linked (GlcNAc...) asparagine glycan. The Plastocyanin-like 3 domain occupies 424–566 (DFPIRPPRPF…ATAFIVEDGP (143 aa)). 8 residues coordinate Cu cation: N483, H486, H488, H545, C546, H547, H551, and M556. The tract at residues 565–590 (GPTPETSLPPPPPEFKRCGNNGLSQP) is disordered.

This sequence belongs to the multicopper oxidase family. Cu cation is required as a cofactor.

It is found in the secreted. The protein localises to the extracellular space. The protein resides in the apoplast. It catalyses the reaction 4 hydroquinone + O2 = 4 benzosemiquinone + 2 H2O. Lignin degradation and detoxification of lignin-derived products. This Oryza sativa subsp. japonica (Rice) protein is Laccase-19 (LAC19).